The chain runs to 201 residues: NADH-ubiquinone oxidoreductase chain 6 (201 aa).

5 consecutive transmembrane segments (helical) span residues 4-24 (LVLFYFFSGLSLVSASIVISV), 28-48 (VFSVVFLILVFFNVVGLLLLL), 55-75 (LLFLIVYVGAIAVLFLFVVMI), 88-108 (FYYAFFGSLIMAIFLFEIFII), and 151-171 (LFILSGFVLLVAILGAIILTL).

Belongs to the complex I subunit 6 family.

It localises to the mitochondrion membrane. It carries out the reaction a ubiquinone + NADH + 5 H(+)(in) = a ubiquinol + NAD(+) + 4 H(+)(out). Functionally, core subunit of the mitochondrial membrane respiratory chain NADH dehydrogenase (Complex I) that is believed to belong to the minimal assembly required for catalysis. Complex I functions in the transfer of electrons from NADH to the respiratory chain. The immediate electron acceptor for the enzyme is believed to be ubiquinone. This chain is NADH-ubiquinone oxidoreductase chain 6 (ND6), found in Cyanidium caldarium (Red alga).